We begin with the raw amino-acid sequence, 701 residues long: Elongation factor G (701 aa).

The tr-type G domain maps to 8–291; the sequence is SRYRNIGIVA…AVIDFLPAPT (284 aa). GTP contacts are provided by residues 17–24, 89–93, and 143–146; these read AHVDAGKT, DTPGH, and NKMD.

The protein belongs to the TRAFAC class translation factor GTPase superfamily. Classic translation factor GTPase family. EF-G/EF-2 subfamily.

It localises to the cytoplasm. In terms of biological role, catalyzes the GTP-dependent ribosomal translocation step during translation elongation. During this step, the ribosome changes from the pre-translocational (PRE) to the post-translocational (POST) state as the newly formed A-site-bound peptidyl-tRNA and P-site-bound deacylated tRNA move to the P and E sites, respectively. Catalyzes the coordinated movement of the two tRNA molecules, the mRNA and conformational changes in the ribosome. This is Elongation factor G from Pseudomonas fluorescens (strain Pf0-1).